The chain runs to 418 residues: Elongation factor 1-gamma 2 (418 aa).

The 82-residue stretch at 1 to 82 folds into the GST N-terminal domain; that stretch reads MALVLHAGSG…YVTRSKADNP (82 aa). In terms of domain architecture, GST C-terminal spans 87-215; it reads SLIEYAHIEQ…VKQAESVPPV (129 aa). The tract at residues 210–265 is disordered; the sequence is ESVPPVQKKAPPPKEQKPKEAKKEAPKEAPKPKAVEKPEEEEEAPKPKPKNPLDLL. The segment covering 221 to 246 has biased composition (basic and acidic residues); the sequence is PPKEQKPKEAKKEAPKEAPKPKAVEK. The EF-1-gamma C-terminal domain maps to 258–418; sequence PKNPLDLLPP…ESLLDAKCFK (161 aa).

In terms of assembly, EF-1 is composed of four subunits: alpha, beta, delta, and gamma.

In terms of biological role, probably plays a role in anchoring the complex to other cellular components. In Oryza sativa subsp. japonica (Rice), this protein is Elongation factor 1-gamma 2.